Reading from the N-terminus, the 271-residue chain is Fork head domain-containing protein FD5 (271 aa).

The fork-head DNA-binding region spans Gln12–Leu103.

In terms of tissue distribution, expressed in early embryogenesis in 14 symmetrical pairs of segmentally arranged neuroblasts and in developing peripheral nervous system. Also, later in embryogenesis, in a cluster of cells in head region.

Its subcellular location is the nucleus. In terms of biological role, involved in development during embryogenesis. This chain is Fork head domain-containing protein FD5 (fd96Cb), found in Drosophila melanogaster (Fruit fly).